The primary structure comprises 369 residues: DNA replication and repair protein RecF (369 aa).

Residue 30-37 participates in ATP binding; that stretch reads GDNAQGKT.

It belongs to the RecF family.

It is found in the cytoplasm. In terms of biological role, the RecF protein is involved in DNA metabolism; it is required for DNA replication and normal SOS inducibility. RecF binds preferentially to single-stranded, linear DNA. It also seems to bind ATP. This chain is DNA replication and repair protein RecF, found in Streptococcus equi subsp. equi (strain 4047).